The following is a 160-amino-acid chain: MMNRVVLVGRLTKDPELRYTPAGVAVATFTLAVNRPFKNGQGEQEADFIQCVVWRKPAENVANFLKKGSLAGVDGRVQTRNYEGNDGKRVYVTEIVAESVQFLESKQNGAGGSTSNNNQSETNYSNDNKTSSYRADRSQNGDSFANEGAPVDINPDDLPF.

Residues 2-104 form the SSB domain; sequence MNRVVLVGRL…IVAESVQFLE (103 aa). Residues 106–133 show a composition bias toward polar residues; the sequence is KQNGAGGSTSNNNQSETNYSNDNKTSSY. Positions 106–160 are disordered; that stretch reads KQNGAGGSTSNNNQSETNYSNDNKTSSYRADRSQNGDSFANEGAPVDINPDDLPF.

In terms of assembly, homotetramer.

The chain is Single-stranded DNA-binding protein 3 (ssb3) from Listeria innocua serovar 6a (strain ATCC BAA-680 / CLIP 11262).